Consider the following 293-residue polypeptide: Small ribosomal subunit protein uS3 (293 aa).

The region spanning V39 to R107 is the KH type-2 domain. The tract at residues R210–E293 is disordered. Residues P219–G238 are compositionally biased toward basic and acidic residues.

The protein belongs to the universal ribosomal protein uS3 family. As to quaternary structure, part of the 30S ribosomal subunit. Forms a tight complex with proteins S10 and S14.

In terms of biological role, binds the lower part of the 30S subunit head. Binds mRNA in the 70S ribosome, positioning it for translation. This chain is Small ribosomal subunit protein uS3, found in Paracidovorax citrulli (strain AAC00-1) (Acidovorax citrulli).